The following is a 170-amino-acid chain: Large ribosomal subunit protein uL16 (170 aa).

The protein belongs to the universal ribosomal protein uL16 family.

This Methanospirillum hungatei JF-1 (strain ATCC 27890 / DSM 864 / NBRC 100397 / JF-1) protein is Large ribosomal subunit protein uL16.